The primary structure comprises 418 residues: MAP kinase-interacting serine/threonine-protein kinase 1 (418 aa).

Residues 1-23 (MVSSQPVPFDDGGKRRKKKRKTR) are disordered. Residues 37–321 (RLTDELLGEG…AFQVLQHPWL (285 aa)) form the Protein kinase domain. Residues 43–51 (LGEGAYAKV) and Lys-66 each bind ATP. Asp-158 functions as the Proton acceptor in the catalytic mechanism. A disordered region spans residues 384–418 (PPSKSRLAKRRAQAHARKGGSHPTHSTVTASQGTP). Positions 389–403 (RLAKRRAQAHARKGG) are enriched in basic residues. Over residues 406 to 418 (PTHSTVTASQGTP) the composition is skewed to polar residues.

It belongs to the protein kinase superfamily. CAMK Ser/Thr protein kinase family. Mg(2+) is required as a cofactor.

The catalysed reaction is L-seryl-[protein] + ATP = O-phospho-L-seryl-[protein] + ADP + H(+). The enzyme catalyses L-threonyl-[protein] + ATP = O-phospho-L-threonyl-[protein] + ADP + H(+). Functionally, may play a role in the response to environmental stress and cytokines. Appears to regulate translation by phosphorylating EIF4E, thus increasing the affinity of this protein for the 7-methylguanosine-containing mRNA cap. This is MAP kinase-interacting serine/threonine-protein kinase 1 (mknk1) from Xenopus laevis (African clawed frog).